We begin with the raw amino-acid sequence, 88 residues long: MGFTEETVRFKLDDSNKKEISETLTDVYASLNDKGYNPINQIVGYVLSGDPAYVPRYNNARNQIRKYERDEIVEELVRYYLKGQGVDL.

This sequence belongs to the UPF0297 family.

This Streptococcus pneumoniae (strain CGSP14) protein is UPF0297 protein SPCG_0205.